We begin with the raw amino-acid sequence, 436 residues long: Chorismate synthase, chloroplastic (436 aa).

The tract at residues 1-24 (MASSSLTSKSILGSTKLGSSSLPS) is disordered. A chloroplast-targeting transit peptide spans 1 to 50 (MASSSLTSKSILGSTKLGSSSLPSELRRLSSPAVQISLRTQTRKNFQIQA).

It belongs to the chorismate synthase family. As to quaternary structure, homotetramer. It depends on FMNH2 as a cofactor.

The protein localises to the plastid. The protein resides in the chloroplast. The catalysed reaction is 5-O-(1-carboxyvinyl)-3-phosphoshikimate = chorismate + phosphate. It participates in metabolic intermediate biosynthesis; chorismate biosynthesis; chorismate from D-erythrose 4-phosphate and phosphoenolpyruvate: step 7/7. Its function is as follows. Catalyzes the last common step of the biosynthesis of aromatic amino acids, produced via the shikimic acid pathway. This is Chorismate synthase, chloroplastic (EMB1144) from Arabidopsis thaliana (Mouse-ear cress).